A 290-amino-acid chain; its full sequence is MSDESYESRIIDGKVLAQQVEEEVRSGVEDLESNRGIVPGLATILVGDDPASKMYVRLKHRACERVGIKAEDYLLPGDATQEELLTLIDSLNKNKDVHAILLQLPLPKHFSPQETQEAMEAISPTKDADGFHPYNMGKLMIGDEDLVPCTPHGVIRALEEYGVSVQGKNAVIVGHSNVVGKPMAAMLLNRNATVSVCHIFTDDLKKYTLGADIIVVATGVKHLIKADMVKEGTVIFDAGITKEEDGVYGDVDFENVIKKASLVTPVPGGVGPMTIAMLMKHVLLCAEKSL.

Residues 174-176 (GHS), I199, and I240 contribute to the NADP(+) site.

The protein belongs to the tetrahydrofolate dehydrogenase/cyclohydrolase family. As to quaternary structure, homodimer.

The catalysed reaction is (6R)-5,10-methylene-5,6,7,8-tetrahydrofolate + NADP(+) = (6R)-5,10-methenyltetrahydrofolate + NADPH. It carries out the reaction (6R)-5,10-methenyltetrahydrofolate + H2O = (6R)-10-formyltetrahydrofolate + H(+). Its pathway is one-carbon metabolism; tetrahydrofolate interconversion. Functionally, catalyzes the oxidation of 5,10-methylenetetrahydrofolate to 5,10-methenyltetrahydrofolate and then the hydrolysis of 5,10-methenyltetrahydrofolate to 10-formyltetrahydrofolate. This Methanosarcina acetivorans (strain ATCC 35395 / DSM 2834 / JCM 12185 / C2A) protein is Bifunctional protein FolD.